A 309-amino-acid chain; its full sequence is Ecotin-like protein 3 (309 aa).

The interval 140-309 is disordered; the sequence is QQELEAPAVS…KSGRDSRRNS (170 aa). Basic and acidic residues predominate over residues 156–167; it reads VRERQNNPEGHA. Residues 168 to 180 show a composition bias toward low complexity; sequence HPVVVHSVESPEV. The segment covering 181–190 has biased composition (basic and acidic residues); the sequence is SGHKDGDQPM. The segment covering 196-205 has biased composition (low complexity); it reads LKQSCSNSSR. Over residues 209–221 the composition is skewed to polar residues; the sequence is HSASGSSPKNTPL. Over residues 261–279 the composition is skewed to basic and acidic residues; the sequence is SDSTSSRKDDQDSGYEKKV. Residues 290-299 are compositionally biased toward low complexity; the sequence is SSPKRSASPK.

The protein belongs to the protease inhibitor I11 (ecotin) family.

In Leishmania braziliensis, this protein is Ecotin-like protein 3.